The following is a 186-amino-acid chain: Putative manganese efflux pump MntP (186 aa).

The next 6 membrane-spanning stretches (helical) occupy residues 1–21 (MSFL…FAVS), 39–59 (LAVF…IGGS), 61–81 (VSSF…AFIG), 102–122 (YSVL…VGMS), 134–156 (VIII…YRLG), and 165–185 (ILGG…HMLW).

Belongs to the MntP (TC 9.B.29) family.

The protein localises to the cell membrane. In terms of biological role, probably functions as a manganese efflux pump. The chain is Putative manganese efflux pump MntP from Methanosarcina acetivorans (strain ATCC 35395 / DSM 2834 / JCM 12185 / C2A).